The chain runs to 245 residues: Uridylate kinase (245 aa).

Residue 12 to 15 (KLSG) coordinates ATP. The involved in allosteric activation by GTP stretch occupies residues 20-25 (GEKGVG). A UMP-binding site is contributed by Gly-54. Positions 55 and 59 each coordinate ATP. UMP contacts are provided by residues Asp-74 and 135 to 142 (IGSPYFST). Residues Asn-163, Tyr-169, and Asp-172 each contribute to the ATP site.

The protein belongs to the UMP kinase family. As to quaternary structure, homohexamer.

The protein resides in the cytoplasm. It catalyses the reaction UMP + ATP = UDP + ADP. The protein operates within pyrimidine metabolism; CTP biosynthesis via de novo pathway; UDP from UMP (UMPK route): step 1/1. Its activity is regulated as follows. Allosterically activated by GTP. Inhibited by UTP. Catalyzes the reversible phosphorylation of UMP to UDP. The protein is Uridylate kinase of Streptococcus thermophilus (strain ATCC BAA-491 / LMD-9).